A 747-amino-acid chain; its full sequence is ATPase family gene 2 protein homolog B (747 aa).

The residue at position 1 (Met1) is an N-acetylmethionine. ATP is bound by residues 234 to 241 (GPPGVGKT) and 500 to 507 (GPPGCAKT).

The protein belongs to the AAA ATPase family. AFG2 subfamily. In terms of assembly, part of the 55LCC heterohexameric ATPase complex composed at least of AIRIM, AFG2A, AFG2B and CINP. Associates with pre-60S ribosomal particles. In terms of tissue distribution, in adult ear, expressed at low levels in neurosensory hair cells (inner and outer) and supporting cells (pillar and Deiter cells).

It is found in the cytoplasm. It localises to the cytoskeleton. The protein resides in the spindle. Its subcellular location is the nucleus. The enzyme catalyses ATP + H2O = ADP + phosphate + H(+). In the context of 55LCC heterohexameric ATPase complex, the ATPase activity is stimulated by DNA binding and inhibited in presence of RNA. ATP-dependent chaperone part of the 55LCC heterohexameric ATPase complex which is chromatin-associated and promotes replisome proteostasis to maintain replication fork progression and genome stability. Required for replication fork progression, sister chromatid cohesion, and chromosome stability. The ATPase activity is specifically enhanced by replication fork DNA and is coupled to cysteine protease-dependent cleavage of replisome substrates in response to replication fork damage. Uses ATPase activity to process replisome substrates in S-phase, facilitating their proteolytic turnover from chromatin to ensure DNA replication and mitotic fidelity. Plays an essential role in the cytoplasmic maturation steps of pre-60S ribosomal particles by promoting the release of shuttling protein RSL24D1/RLP24 from the pre-ribosomal particles. This is ATPase family gene 2 protein homolog B (Afg2b) from Mus musculus (Mouse).